We begin with the raw amino-acid sequence, 59 residues long: Salivary thrombin inhibitor XC-43 (59 aa).

Positions Met-1–Ala-23 are cleaved as a signal peptide.

In terms of assembly, interacts with human F2 (thrombin). As to expression, salivary gland (at protein level).

It localises to the secreted. Functionally, anticoagulant protein that acts as a competitive inhibitor of host thrombin. Inhibits thrombin-mediated host platelet aggregation. The protein is Salivary thrombin inhibitor XC-43 of Xenopsylla cheopis (Oriental rat flea).